Consider the following 679-residue polypeptide: Enzymatic polyprotein (679 aa).

The segment at 40-130 (LHCFVDTGAS…LYEPFIQFTD (91 aa)) is protease. The active site involves aspartate 45. A Reverse transcriptase domain is found at 272-452 (LKVIKPSKSP…KKINFLGLEI (181 aa)).

This sequence belongs to the caulimoviridae enzymatic polyprotein family.

It catalyses the reaction DNA(n) + a 2'-deoxyribonucleoside 5'-triphosphate = DNA(n+1) + diphosphate. Encodes for at least two polypeptides: protease (PR) and reverse transcriptase (RT). The protease processes the polyprotein in cis. Reverse transcriptase is multifunctional enzyme that converts the viral RNA genome into dsDNA in viral cytoplasmic capsids. This enzyme displays a DNA polymerase activity that can copy either DNA or RNA templates, and a ribonuclease H (RNase H) activity that cleaves the RNA strand of RNA-DNA heteroduplexes in a partially processive 3'- to 5'-endonucleasic mode. Neo-synthesized pregenomic RNA (pgRNA) are encapsidated, and reverse-transcribed inside the nucleocapsid. Partial (+)DNA is synthesized from the (-)DNA template and generates the relaxed circular DNA (RC-DNA) genome. After budding and infection, the RC-DNA migrates in the nucleus, and is converted into a plasmid-like covalently closed circular DNA (cccDNA). The protein is Enzymatic polyprotein of Cauliflower mosaic virus (strain BBC) (CaMV).